A 310-amino-acid polypeptide reads, in one-letter code: p-hydroxybenzoic acid efflux pump subunit AaeA (310 aa).

The helical transmembrane segment at 12–32 threads the bilayer; sequence AITLVLVILAFIAIFRAWVYY.

It belongs to the membrane fusion protein (MFP) (TC 8.A.1) family.

The protein localises to the cell inner membrane. Functionally, forms an efflux pump with AaeB. The sequence is that of p-hydroxybenzoic acid efflux pump subunit AaeA from Salmonella arizonae (strain ATCC BAA-731 / CDC346-86 / RSK2980).